The chain runs to 130 residues: ATP synthase epsilon chain (130 aa).

Belongs to the ATPase epsilon chain family. As to quaternary structure, F-type ATPases have 2 components, CF(1) - the catalytic core - and CF(0) - the membrane proton channel. CF(1) has five subunits: alpha(3), beta(3), gamma(1), delta(1), epsilon(1). CF(0) has three main subunits: a, b and c.

It is found in the cell inner membrane. Produces ATP from ADP in the presence of a proton gradient across the membrane. This Fuscovulum blasticum (Rhodobacter blasticus) protein is ATP synthase epsilon chain (atpC).